A 570-amino-acid chain; its full sequence is Sulfite reductase [NADPH] hemoprotein beta-component (570 aa).

Residues C434, C440, C479, and C483 each contribute to the [4Fe-4S] cluster site. C483 contributes to the siroheme binding site.

Belongs to the nitrite and sulfite reductase 4Fe-4S domain family. In terms of assembly, alpha(8)-beta(8). The alpha component is a flavoprotein, the beta component is a hemoprotein. Siroheme serves as cofactor. It depends on [4Fe-4S] cluster as a cofactor.

It catalyses the reaction hydrogen sulfide + 3 NADP(+) + 3 H2O = sulfite + 3 NADPH + 4 H(+). It functions in the pathway sulfur metabolism; hydrogen sulfide biosynthesis; hydrogen sulfide from sulfite (NADPH route): step 1/1. Component of the sulfite reductase complex that catalyzes the 6-electron reduction of sulfite to sulfide. This is one of several activities required for the biosynthesis of L-cysteine from sulfate. The chain is Sulfite reductase [NADPH] hemoprotein beta-component from Zymomonas mobilis subsp. mobilis (strain ATCC 31821 / ZM4 / CP4).